The chain runs to 318 residues: DNA-directed RNA polymerase subunit alpha 2 (318 aa).

The tract at residues 1-227 is alpha N-terminal domain (alpha-NTD); sequence MALENLLHPT…NQLRNIVDIE (227 aa). Residues 242 to 318 are alpha C-terminal domain (alpha-CTD); the sequence is INPILLKHVE…TLIENWPQDL (77 aa).

This sequence belongs to the RNA polymerase alpha chain family. As to quaternary structure, homodimer. The RNAP catalytic core consists of 2 alpha, 1 beta, 1 beta' and 1 omega subunit. When a sigma factor is associated with the core the holoenzyme is formed, which can initiate transcription.

The catalysed reaction is RNA(n) + a ribonucleoside 5'-triphosphate = RNA(n+1) + diphosphate. DNA-dependent RNA polymerase catalyzes the transcription of DNA into RNA using the four ribonucleoside triphosphates as substrates. This Francisella tularensis subsp. novicida (strain U112) protein is DNA-directed RNA polymerase subunit alpha 2.